The following is a 1021-amino-acid chain: Solute carrier family 12 member 3 (1021 aa).

Residues 1-137 are Cytoplasmic-facing; that stretch reads MAELPTTETP…KNPEEPVRFG (137 aa). Ser43 is subject to Phosphoserine. Thr46 bears the Phosphothreonine; by OXSR1 and STK39 mark. A Phosphoserine modification is found at Ser49. Position 50 is a phosphothreonine (Thr50). Residues Thr55 and Thr60 each carry the phosphothreonine; by OXSR1 and STK39 modification. At Ser73 the chain carries Phosphoserine. Ser91 carries the post-translational modification Phosphoserine; by OXSR1 and STK39. At Thr124 the chain carries Phosphothreonine. Ser126 is modified (phosphoserine). A discontinuously helical membrane pass occupies residues 138-167; the sequence is WVKGVMIRCMLNIWGVILYLRLPWITAQAG. Leu148 serves as a coordination point for Na(+). A polythiazide-binding site is contributed by Asn149. Na(+) is bound at residue Trp151. The helical transmembrane segment at 168-189 threads the bilayer; that stretch reads IVLTWIIILLSVTVTSITGLSI. Over 190–220 the chain is Cytoplasmic; the sequence is SAISTNGKVKSGGTYFLISRSLGPELGGSIG. The helical transmembrane segment at 221 to 243 threads the bilayer; the sequence is LIFAFANAVGVAMHTVGFAETVR. Residues Asn227 and His234 each contribute to the polythiazide site. Topologically, residues 244 to 255 are extracellular; sequence DLLQEYGAPIVD. The next 2 membrane-spanning stretches (helical) occupy residues 256-280 and 281-303; these read PIND…AGME and WESK…YLVG. At 304–338 the chain is on the extracellular side; it reads TLIPPSEDKASKGFFSYRADIFVQNLVPDWRGPDG. Residues 339–360 form a discontinuously helical membrane-spanning segment; the sequence is TFFGMFSIFFPSATGILAGANI. Thr352 contacts polythiazide. Positions 353, 354, and 355 each coordinate chloride. Asn359 contributes to the polythiazide binding site. The Cytoplasmic portion of the chain corresponds to 361–371; it reads SGDLKDPAIAI. A helical transmembrane segment spans residues 372–393; sequence PKGTLMAIFWTTISYLAISATI. The Extracellular portion of the chain corresponds to 394 to 453; the sequence is GSCVVRDASGVLNDTVTPGWGACEGLACSYGWNFTECTQQHSCHYGLINYYQTMSMVSGF. Asn406 carries an N-linked (GlcNAc...) asparagine glycan. A disulfide bond links Cys416 and Cys421. Residue Asn426 is glycosylated (N-linked (GlcNAc...) asparagine). The cysteines at positions 430 and 436 are disulfide-linked. A helical membrane pass occupies residues 454-477; it reads APLITAGIFGATLSSALACLVSAA. Na(+) is bound by residues Ala464, Ser467, and Ser468. Topologically, residues 478–507 are cytoplasmic; sequence KVFQCLCEDQLYPLIGFFGKGYGKNKEPVR. A helical membrane pass occupies residues 508–522; it reads GYLLAYAIAVAFIII. The Extracellular segment spans residues 523 to 527; the sequence is AELNT. A helical membrane pass occupies residues 528-544; sequence IAPIISNFFLCSYALIN. Residue Tyr540 coordinates chloride. Residues 545–567 lie on the Cytoplasmic side of the membrane; it reads FSCFHASITNSPGWRPSFQYYNK. The next 2 helical transmembrane spans lie at 568-587 and 588-599; these read WAAL…LTWW and AALIAIGVVLFL. The Cytoplasmic portion of the chain corresponds to 600–1021; sequence LLYVIYKKPE…QENVLTFYCQ (422 aa). Residues 615 to 630 form a scissor helix region; sequence SVQAGSYNLALSYSVG. 6 residues coordinate ATP: Leu648, Arg655, Val677, Gly741, Leu780, and Asn781.

Belongs to the SLC12A transporter family. Homodimer; adopts a domain-swap conformation at the scissor helices connecting the transmembrane domain and C-terminal domain. Interacts with KLHL3. Interacts with IL18R1; this interaction is increased by IL18 treatment. Post-translationally, ubiquitinated; ubiquitination is essential for regulation of endocytosis. The BCR(KLHL3) complex was initially identified as a candidate ubiquitin ligase for SLC12A3. However, it was later shown that it is not the case. Phosphorylated at Thr-46, Thr-55, Thr-60 and Ser-91 by OXSR1/OSR1 and STK39/SPAK downstream of WNK4, promoting its activity. Phosphorylated in response to IL18. In terms of tissue distribution, predominantly expressed in the kidney (at protein level). Localizes to the distal convoluted tubules (at protein level). Not detected in normal aorta, but abundantly expressed in fatty streaks and advanced atherosclerotic lesions (at protein level).

Its subcellular location is the cell membrane. The protein localises to the apical cell membrane. It carries out the reaction chloride(out) + Na(+)(out) = chloride(in) + Na(+)(in). Phosphorylation by OXSR1/OSR1 and STK39/SPAK in kidney distal convoluted tubules downstream of WNK4 promotes its activity. Also activated by OXSR1/OSR1 and STK39/SPAK downstream of WNK3. Target of thiazide diuretics used in the treatment of high blood pressure. Thiazide drugs, such as polythiazide, specifically inhibit SLC12A3/NCC transporter activity by competing with chloride for binding and by locking SLC12A3/NCC in an outward-facing conformation. Functionally, electroneutral sodium and chloride ion cotransporter, which acts as a key mediator of sodium and chloride reabsorption in kidney distal convoluted tubules. Also acts as a receptor for the pro-inflammatory cytokine IL18, thereby contributing to IL18-induced cytokine production, including IFNG, IL6, IL18 and CCL2. May act either independently of IL18R1, or in a complex with IL18R1. This is Solute carrier family 12 member 3 from Homo sapiens (Human).